A 66-amino-acid chain; its full sequence is Translational regulator CsrA (66 aa).

It belongs to the CsrA/RsmA family. In terms of assembly, homodimer; the beta-strands of each monomer intercalate to form a hydrophobic core, while the alpha-helices form wings that extend away from the core.

The protein resides in the cytoplasm. In terms of biological role, a key translational regulator that binds mRNA to regulate translation initiation and/or mRNA stability. Mediates global changes in gene expression, shifting from rapid growth to stress survival by linking envelope stress, the stringent response and the catabolite repression systems. Usually binds in the 5'-UTR; binding at or near the Shine-Dalgarno sequence prevents ribosome-binding, repressing translation, binding elsewhere in the 5'-UTR can activate translation and/or stabilize the mRNA. Its function is antagonized by small RNA(s). This chain is Translational regulator CsrA, found in Alkalilimnicola ehrlichii (strain ATCC BAA-1101 / DSM 17681 / MLHE-1).